Consider the following 420-residue polypeptide: L-rhamnose isomerase (420 aa).

3 residues coordinate Mn(2+): His-262, Asp-294, and Asp-296.

The protein belongs to the rhamnose isomerase family. As to quaternary structure, homotetramer. It depends on Mn(2+) as a cofactor.

It localises to the cytoplasm. It catalyses the reaction L-rhamnopyranose = L-rhamnulose. It participates in carbohydrate degradation; L-rhamnose degradation; glycerone phosphate from L-rhamnose: step 1/3. In terms of biological role, catalyzes the interconversion of L-rhamnose and L-rhamnulose. The polypeptide is L-rhamnose isomerase (Pectobacterium atrosepticum (strain SCRI 1043 / ATCC BAA-672) (Erwinia carotovora subsp. atroseptica)).